The primary structure comprises 69 residues: Conotoxin Lp3.1 (69 aa).

The first 20 residues, 1-20 (MLKMGVLLFIFLVLFPLTTL), serve as a signal peptide directing secretion. A propeptide spanning residues 21–54 (ELDTDRPVERHAAIKQDLKPQERRGIRLHAPRDE) is cleaved from the precursor. Cystine bridges form between C55-C67, C56-C65, and C61-C68.

This sequence belongs to the conotoxin M superfamily. Expressed by the venom duct.

It localises to the secreted. The sequence is that of Conotoxin Lp3.1 from Conus leopardus (Leopard cone).